A 160-amino-acid chain; its full sequence is Cytochrome b6-f complex subunit 4 (160 aa).

A run of 3 helical transmembrane segments spans residues 36–56 (IFYM…GLAV), 96–116 (LGVL…FIKI), and 131–151 (TVFL…ALPI).

It belongs to the cytochrome b family. PetD subfamily. In terms of assembly, the 4 large subunits of the cytochrome b6-f complex are cytochrome b6, subunit IV (17 kDa polypeptide, petD), cytochrome f and the Rieske protein, while the 4 small subunits are petG, petL, petM and petN. The complex functions as a dimer.

It localises to the plastid. It is found in the chloroplast thylakoid membrane. Component of the cytochrome b6-f complex, which mediates electron transfer between photosystem II (PSII) and photosystem I (PSI), cyclic electron flow around PSI, and state transitions. In Auxenochlorella protothecoides (Green microalga), this protein is Cytochrome b6-f complex subunit 4.